The sequence spans 1344 residues: Myb-binding protein 1A (1344 aa).

The disordered stretch occupies residues 1–24 (MAEMKSPTKAEPASPAEAPQGDRR). An N-acetylalanine modification is found at Ala-2. Positions 2–580 (AEMKSPTKAE…WDQMMSTLKE (579 aa)) are interaction with MYB. Ser-14 carries the post-translational modification Phosphoserine. An N6-acetyllysine mark is found at Lys-69 and Lys-156. 2 short sequence motifs (nuclear export signal) span residues 238–256 (SEDNIPSLVNILKVAANSV) and 261–279 (KLPDVALNLLRLALQENKF). Disordered regions lie at residues 696 to 752 (NEDE…DVDP) and 1150 to 1344 (PKSE…VQTP). The span at 708-730 (TDEKQLKHGEDADSDSEDSKNSE) shows a compositional bias: basic and acidic residues. Residues 731–746 (SDVDSEDGEESEEEDR) show a composition bias toward acidic residues. Positions 1150–1161 (PKSEKKNVKDIP) are enriched in basic and acidic residues. Residue Lys-1151 forms a Glycyl lysine isopeptide (Lys-Gly) (interchain with G-Cter in SUMO2) linkage. The interval 1154–1344 (KKNVKDIPSD…RVARRRVQTP (191 aa)) is required for nuclear and nucleolar localization. Ser-1162 and Ser-1166 each carry phosphoserine. Over residues 1170–1187 (TKRKKKGFLPETKKRKKL) the composition is skewed to basic residues. Residue Ser-1189 is modified to Phosphoserine. Residue Thr-1193 is modified to Phosphothreonine. Residues Ser-1221 and Ser-1246 each carry the phosphoserine modification. Positions 1247 to 1256 (PAPNNPTLSP) are enriched in low complexity. At Thr-1253 the chain carries Phosphothreonine. Ser-1255 bears the Phosphoserine mark. Thr-1258 and Thr-1280 each carry phosphothreonine. Phosphoserine is present on residues Ser-1283, Ser-1305, and Ser-1318. Over residues 1301 to 1316 (VKRRSSQSALPKKRAR) the composition is skewed to basic residues. Residues 1317–1329 (LSLVSRSPSLLQS) show a composition bias toward low complexity. At Arg-1322 the chain carries Citrulline. Ser-1323, Ser-1325, and Ser-1329 each carry phosphoserine. The segment covering 1331-1344 (IRKRRVARRRVQTP) has biased composition (basic residues).

Belongs to the MYBBP1A family. Binds to and represses JUN and MYB via the leucine zipper regions present in these proteins. Also binds to and represses PPARGC1A: this interaction is abrogated when PPARGC1A is phosphorylated by MAPK1/ERK. Binds to and stimulates transcription by AHR. Binds to KPNA2. Component of the B-WICH complex, at least composed of SMARCA5/SNF2H, BAZ1B/WSTF, SF3B1, DEK, MYO1C, ERCC6, MYBBP1A and DDX21. Interacts with CLOCK and CRY1. Post-translationally, citrullinated by PADI4.

It localises to the nucleus. The protein resides in the nucleolus. It is found in the cytoplasm. Its function is as follows. May activate or repress transcription via interactions with sequence specific DNA-binding proteins. Repression may be mediated at least in part by histone deacetylase activity (HDAC activity). Acts as a corepressor and in concert with CRY1, represses the transcription of the core circadian clock component PER2. Preferentially binds to dimethylated histone H3 'Lys-9' (H3K9me2) on the PER2 promoter. Has a role in rRNA biogenesis together with PWP1. This is Myb-binding protein 1A (Mybbp1a) from Rattus norvegicus (Rat).